Reading from the N-terminus, the 207-residue chain is Acyl-homoserine-lactone synthase (207 aa).

This sequence belongs to the autoinducer synthase family.

The catalysed reaction is a fatty acyl-[ACP] + S-adenosyl-L-methionine = an N-acyl-L-homoserine lactone + S-methyl-5'-thioadenosine + holo-[ACP] + H(+). Its function is as follows. Required for the synthesis of N-butanoyl-L-homoserine lactone (BHL), an autoinducer molecule which binds to AhyR. This is Acyl-homoserine-lactone synthase (ahyI) from Aeromonas hydrophila.